The sequence spans 255 residues: Thiazole synthase (255 aa).

Catalysis depends on lysine 96, which acts as the Schiff-base intermediate with DXP. Residues glycine 157, 183–184, and 205–206 contribute to the 1-deoxy-D-xylulose 5-phosphate site; these read AG and NT.

The protein belongs to the ThiG family. As to quaternary structure, homotetramer. Forms heterodimers with either ThiH or ThiS.

The protein resides in the cytoplasm. The catalysed reaction is [ThiS sulfur-carrier protein]-C-terminal-Gly-aminoethanethioate + 2-iminoacetate + 1-deoxy-D-xylulose 5-phosphate = [ThiS sulfur-carrier protein]-C-terminal Gly-Gly + 2-[(2R,5Z)-2-carboxy-4-methylthiazol-5(2H)-ylidene]ethyl phosphate + 2 H2O + H(+). The protein operates within cofactor biosynthesis; thiamine diphosphate biosynthesis. Its function is as follows. Catalyzes the rearrangement of 1-deoxy-D-xylulose 5-phosphate (DXP) to produce the thiazole phosphate moiety of thiamine. Sulfur is provided by the thiocarboxylate moiety of the carrier protein ThiS. In vitro, sulfur can be provided by H(2)S. This chain is Thiazole synthase, found in Staphylococcus saprophyticus subsp. saprophyticus (strain ATCC 15305 / DSM 20229 / NCIMB 8711 / NCTC 7292 / S-41).